Consider the following 469-residue polypeptide: Glutamate--tRNA ligase (469 aa).

A 'HIGH' region motif is present at residues 11 to 21 (PSPTGFIHLGN). The 'KMSKS' region motif lies at 243–247 (KMSKR). Residue Lys-246 participates in ATP binding.

Belongs to the class-I aminoacyl-tRNA synthetase family. Glutamate--tRNA ligase type 1 subfamily. Monomer.

It localises to the cytoplasm. The enzyme catalyses tRNA(Glu) + L-glutamate + ATP = L-glutamyl-tRNA(Glu) + AMP + diphosphate. Functionally, catalyzes the attachment of glutamate to tRNA(Glu) in a two-step reaction: glutamate is first activated by ATP to form Glu-AMP and then transferred to the acceptor end of tRNA(Glu). This chain is Glutamate--tRNA ligase, found in Burkholderia orbicola (strain AU 1054).